We begin with the raw amino-acid sequence, 159 residues long: Phosphopantetheine adenylyltransferase (159 aa).

S9 contributes to the substrate binding site. Residues 9 to 10 and H17 each bind ATP; that span reads SF. Positions 41, 73, and 87 each coordinate substrate. ATP contacts are provided by residues 88 to 90, E98, and 122 to 128; these read GLR and YSFLSSS.

Belongs to the bacterial CoaD family. Homohexamer. It depends on Mg(2+) as a cofactor.

The protein resides in the cytoplasm. It catalyses the reaction (R)-4'-phosphopantetheine + ATP + H(+) = 3'-dephospho-CoA + diphosphate. It participates in cofactor biosynthesis; coenzyme A biosynthesis; CoA from (R)-pantothenate: step 4/5. In terms of biological role, reversibly transfers an adenylyl group from ATP to 4'-phosphopantetheine, yielding dephospho-CoA (dPCoA) and pyrophosphate. The sequence is that of Phosphopantetheine adenylyltransferase from Streptomyces avermitilis (strain ATCC 31267 / DSM 46492 / JCM 5070 / NBRC 14893 / NCIMB 12804 / NRRL 8165 / MA-4680).